We begin with the raw amino-acid sequence, 198 residues long: Segregation and condensation protein B (198 aa).

Positions 167 to 198 (PKLADPEADDPDQNEMDLFFDRFNQSKEQEEE) are disordered. Positions 172–181 (PEADDPDQNE) are enriched in acidic residues.

It belongs to the ScpB family. In terms of assembly, homodimer. Homodimerization may be required to stabilize the binding of ScpA to the Smc head domains. Component of a cohesin-like complex composed of ScpA, ScpB and the Smc homodimer, in which ScpA and ScpB bind to the head domain of Smc. The presence of the three proteins is required for the association of the complex with DNA.

The protein resides in the cytoplasm. Participates in chromosomal partition during cell division. May act via the formation of a condensin-like complex containing Smc and ScpA that pull DNA away from mid-cell into both cell halves. This is Segregation and condensation protein B from Listeria welshimeri serovar 6b (strain ATCC 35897 / DSM 20650 / CCUG 15529 / CIP 8149 / NCTC 11857 / SLCC 5334 / V8).